Consider the following 108-residue polypeptide: Phosphoribosyl-ATP pyrophosphatase (108 aa).

The protein belongs to the PRA-PH family.

The protein resides in the cytoplasm. It catalyses the reaction 1-(5-phospho-beta-D-ribosyl)-ATP + H2O = 1-(5-phospho-beta-D-ribosyl)-5'-AMP + diphosphate + H(+). It functions in the pathway amino-acid biosynthesis; L-histidine biosynthesis; L-histidine from 5-phospho-alpha-D-ribose 1-diphosphate: step 2/9. This chain is Phosphoribosyl-ATP pyrophosphatase, found in Aromatoleum aromaticum (strain DSM 19018 / LMG 30748 / EbN1) (Azoarcus sp. (strain EbN1)).